A 490-amino-acid polypeptide reads, in one-letter code: MTIGRMENVEVFTAEGKGRGLKATKEFWAADIIFAERAYSAVVFDSLVNFVCHTCFKRQEKLHRCGQCKFAHYCDRTCQKDAWLNHKNECSAIKRYGKVPNENIRLAARIMWRVEREGTGLTEGCLVSVDDLQNHVEHFGEEEQKDLRVDVDTFLQYWPPQSQQFSMQYISHIFGVINCNGFTLSDQRGLQAVGVGIFPNLGLVNHDCWPNCTVIFNNGNHEAVKSMFHTQMRIELRALGKISEGEELTVSYIDFLNVSEERKRQLKKQYYFDCTCEHCQKKLKDDLFLGVKDNPKPSQEVVKEMIQFSKDTLEKIDKARSEGLYHEVVKLCRECLEKQEPVFADTNIYMLRMLSIVSEVLSYLQAFEEASFYARRMVDGYMKLYHPNNAQLGMAVMRAGLTNWHAGNIEVGHGMICKAYAILLVTHGPSHPITKDLEAMRVQTEMELRMFRQNEFMYYKMREAALNNQPMQVMAEPSNEPSPALFHKKQ.

The region spanning 7–253 is the SET domain; the sequence is ENVEVFTAEG…EGEELTVSYI (247 aa). 17 to 19 is an S-adenosyl-L-methionine binding site; that stretch reads KGR. Zn(2+)-binding residues include Cys52, Cys55, Cys65, Cys68, Cys74, Cys78, His86, and Cys90. Residues 52–90 form an MYND-type zinc finger; it reads CHTCFKRQEKLHRCGQCKFAHYCDRTCQKDAWLNHKNEC. S-adenosyl-L-methionine is bound by residues His135 and 205–206; that span reads NH. Cys208 lines the Zn(2+) pocket. 270–272 provides a ligand contact to S-adenosyl-L-methionine; sequence YYF. Cys274, Cys276, and Cys279 together coordinate Zn(2+).

Belongs to the class V-like SAM-binding methyltransferase superfamily. In terms of assembly, interacts with HDAC1, HDAC2 and HDAC3. Interacts (via MYND-type zinc finger) with NACA isoform skNAC. Expression seems mostly restricted to heart and skeletal muscle.

It localises to the cytoplasm. It is found in the nucleus. It carries out the reaction L-lysyl(4)-[histone H3] + 3 S-adenosyl-L-methionine = N(6),N(6),N(6)-trimethyl-L-lysyl(4)-[histone H3] + 3 S-adenosyl-L-homocysteine + 3 H(+). Its function is as follows. Methylates histone H3 at 'Lys-4' (H3K4me), seems able to perform both mono-, di-, and trimethylation. Acts as a transcriptional repressor. Essential for cardiomyocyte differentiation and cardiac morphogenesis. The chain is Histone-lysine N-methyltransferase SMYD1 (SMYD1) from Homo sapiens (Human).